Consider the following 212-residue polypeptide: Leucyl/phenylalanyl-tRNA--protein transferase (212 aa).

The protein belongs to the L/F-transferase family.

The protein resides in the cytoplasm. It catalyses the reaction N-terminal L-lysyl-[protein] + L-leucyl-tRNA(Leu) = N-terminal L-leucyl-L-lysyl-[protein] + tRNA(Leu) + H(+). The enzyme catalyses N-terminal L-arginyl-[protein] + L-leucyl-tRNA(Leu) = N-terminal L-leucyl-L-arginyl-[protein] + tRNA(Leu) + H(+). It carries out the reaction L-phenylalanyl-tRNA(Phe) + an N-terminal L-alpha-aminoacyl-[protein] = an N-terminal L-phenylalanyl-L-alpha-aminoacyl-[protein] + tRNA(Phe). Its function is as follows. Functions in the N-end rule pathway of protein degradation where it conjugates Leu, Phe and, less efficiently, Met from aminoacyl-tRNAs to the N-termini of proteins containing an N-terminal arginine or lysine. This is Leucyl/phenylalanyl-tRNA--protein transferase from Allorhizobium ampelinum (strain ATCC BAA-846 / DSM 112012 / S4) (Agrobacterium vitis (strain S4)).